The chain runs to 412 residues: uncharacterized protein (412 aa).

3 disordered regions span residues 150-171 (NTPG…QLGD), 177-196 (QITS…QQQQ), and 302-412 (QAQQ…PLNP). Over residues 156–168 (QAQQQQQQQQQQQ) the composition is skewed to low complexity. Polar residues-rich tracts occupy residues 177–187 (QITSSNNSGNS) and 310–321 (MGSSPTHSSPTI). Over residues 335–345 (GGIINTNTNLN) the composition is skewed to low complexity. The segment covering 350–363 (VSPNQPMPNSSPIL) has biased composition (polar residues). Composition is skewed to low complexity over residues 364-373 (PTNASSVVPP) and 381-394 (TSNN…TTSP).

This is an uncharacterized protein from Dictyostelium discoideum (Social amoeba).